We begin with the raw amino-acid sequence, 458 residues long: Argininosuccinate lyase (458 aa).

The protein belongs to the lyase 1 family. Argininosuccinate lyase subfamily.

The protein localises to the cytoplasm. It carries out the reaction 2-(N(omega)-L-arginino)succinate = fumarate + L-arginine. The protein operates within amino-acid biosynthesis; L-arginine biosynthesis; L-arginine from L-ornithine and carbamoyl phosphate: step 3/3. The polypeptide is Argininosuccinate lyase (Neisseria meningitidis serogroup C / serotype 2a (strain ATCC 700532 / DSM 15464 / FAM18)).